The primary structure comprises 207 residues: NAD(P)H-quinone oxidoreductase subunit K, chloroplastic (207 aa).

[4Fe-4S] cluster contacts are provided by C47, C48, C112, and C143.

The protein belongs to the complex I 20 kDa subunit family. NDH is composed of at least 16 different subunits, 5 of which are encoded in the nucleus. The cofactor is [4Fe-4S] cluster.

It localises to the plastid. The protein localises to the chloroplast thylakoid membrane. It catalyses the reaction a plastoquinone + NADH + (n+1) H(+)(in) = a plastoquinol + NAD(+) + n H(+)(out). It carries out the reaction a plastoquinone + NADPH + (n+1) H(+)(in) = a plastoquinol + NADP(+) + n H(+)(out). NDH shuttles electrons from NAD(P)H:plastoquinone, via FMN and iron-sulfur (Fe-S) centers, to quinones in the photosynthetic chain and possibly in a chloroplast respiratory chain. The immediate electron acceptor for the enzyme in this species is believed to be plastoquinone. Couples the redox reaction to proton translocation, and thus conserves the redox energy in a proton gradient. In Psilotum nudum (Whisk fern), this protein is NAD(P)H-quinone oxidoreductase subunit K, chloroplastic.